A 739-amino-acid chain; its full sequence is DNA ligase (739 aa).

A disordered region spans residues 1–29 (MTANRPALPTRDKAVSDLSATEASDEHAA). NAD(+)-binding positions include 51–55 (DADYD), 100–101 (SL), and E134. K136 serves as the catalytic N6-AMP-lysine intermediate. NAD(+) contacts are provided by R157, E194, K311, and K335. C440, C443, C464, and C470 together coordinate Zn(2+). The tract at residues 592 to 612 (PTEMEEASEETPPTRRRKPQG) is disordered. The BRCT domain occupies 662–739 (ASTSPVSGKT…TEDEWFDLVG (78 aa)).

Belongs to the NAD-dependent DNA ligase family. LigA subfamily. Mg(2+) is required as a cofactor. It depends on Mn(2+) as a cofactor.

The catalysed reaction is NAD(+) + (deoxyribonucleotide)n-3'-hydroxyl + 5'-phospho-(deoxyribonucleotide)m = (deoxyribonucleotide)n+m + AMP + beta-nicotinamide D-nucleotide.. Functionally, DNA ligase that catalyzes the formation of phosphodiester linkages between 5'-phosphoryl and 3'-hydroxyl groups in double-stranded DNA using NAD as a coenzyme and as the energy source for the reaction. It is essential for DNA replication and repair of damaged DNA. The polypeptide is DNA ligase (Azorhizobium caulinodans (strain ATCC 43989 / DSM 5975 / JCM 20966 / LMG 6465 / NBRC 14845 / NCIMB 13405 / ORS 571)).